Here is a 229-residue protein sequence, read N- to C-terminus: Orotidine 5'-phosphate decarboxylase (229 aa).

Substrate is bound by residues D10, K32, 59–68, T119, R180, Q189, G209, and R210; that span reads DLKFHDIPNT. The active-site Proton donor is K61.

This sequence belongs to the OMP decarboxylase family. Type 1 subfamily. Homodimer.

The enzyme catalyses orotidine 5'-phosphate + H(+) = UMP + CO2. It functions in the pathway pyrimidine metabolism; UMP biosynthesis via de novo pathway; UMP from orotate: step 2/2. Its function is as follows. Catalyzes the decarboxylation of orotidine 5'-monophosphate (OMP) to uridine 5'-monophosphate (UMP). The polypeptide is Orotidine 5'-phosphate decarboxylase (Legionella pneumophila (strain Paris)).